We begin with the raw amino-acid sequence, 130 residues long: Small ribosomal subunit protein uS8 (130 aa).

The protein belongs to the universal ribosomal protein uS8 family. Part of the 30S ribosomal subunit. Contacts proteins S5 and S12.

Functionally, one of the primary rRNA binding proteins, it binds directly to 16S rRNA central domain where it helps coordinate assembly of the platform of the 30S subunit. This is Small ribosomal subunit protein uS8 from Tolumonas auensis (strain DSM 9187 / NBRC 110442 / TA 4).